We begin with the raw amino-acid sequence, 275 residues long: Diaminopimelate epimerase (275 aa).

N12, Q45, and N65 together coordinate substrate. Catalysis depends on C74, which acts as the Proton donor. Substrate is bound by residues 75–76, N158, N191, and 209–210; these read GN and ER. Catalysis depends on C218, which acts as the Proton acceptor. 219-220 serves as a coordination point for substrate; sequence GT.

This sequence belongs to the diaminopimelate epimerase family. As to quaternary structure, homodimer.

The protein resides in the cytoplasm. The catalysed reaction is (2S,6S)-2,6-diaminopimelate = meso-2,6-diaminopimelate. It participates in amino-acid biosynthesis; L-lysine biosynthesis via DAP pathway; DL-2,6-diaminopimelate from LL-2,6-diaminopimelate: step 1/1. Functionally, catalyzes the stereoinversion of LL-2,6-diaminopimelate (L,L-DAP) to meso-diaminopimelate (meso-DAP), a precursor of L-lysine and an essential component of the bacterial peptidoglycan. The chain is Diaminopimelate epimerase from Shewanella frigidimarina (strain NCIMB 400).